The sequence spans 504 residues: Diacylglycerol O-acyltransferase 1B (504 aa).

Positions 1–72 are disordered; it reads MAISDEPESV…VNSQQQNEKQ (72 aa). The span at 24 to 41 shows a compositional bias: polar residues; that stretch reads SATSTAGLFNSPETTTDS. Residues 53–65 show a composition bias toward low complexity; it reads DDSINSDDAAVNS. The next 7 membrane-spanning stretches (helical) occupy residues 108 to 128, 152 to 172, 184 to 204, 209 to 229, 259 to 279, 301 to 321, and 348 to 368; these read HAGL…RLII, WPLF…FIVE, VVVV…VLVI, SAFV…LKLV, YPYN…TLCY, LIIF…PIVQ, and VWLC…AELL. The FYXDWWN motif signature appears at 375–381; the sequence is FYKDWWN. Helical transmembrane passes span 416-436, 438-458, and 471-491; these read AAAL…CIAV, CHIF…LVLI, and VGNM…CVLL. Residue His430 is part of the active site.

This sequence belongs to the membrane-bound acyltransferase family. Sterol o-acyltransferase subfamily. As to expression, highly expressed in flowers and pods. Expressed at low levels in roots, stems and leaves.

The protein localises to the endoplasmic reticulum membrane. It carries out the reaction an acyl-CoA + a 1,2-diacyl-sn-glycerol = a triacyl-sn-glycerol + CoA. It functions in the pathway glycerolipid metabolism; triacylglycerol biosynthesis. Functionally, major contributors to triacylglycerol (TAG) synthesis and oil accumulation in developing seeds. Catalyzes the acylation of the sn-3 hydroxy group of sn-1,2-diacylglycerol using acyl-CoA. Has a marked preference for oleoyl-CoA and sn-1,2-dioleoylglycerol over vernoloyl-CoA and sn-1,2-divernoloylglycerol. The protein is Diacylglycerol O-acyltransferase 1B of Glycine max (Soybean).